A 142-amino-acid chain; its full sequence is Cell division protein SepF (142 aa).

Positions 21 to 31 (ETTTVEEEREE) are enriched in acidic residues. The disordered stretch occupies residues 21 to 46 (ETTTVEEEREEQESSHKRQPAISRTN).

This sequence belongs to the SepF family. Homodimer. Interacts with FtsZ.

Its subcellular location is the cytoplasm. Functionally, cell division protein that is part of the divisome complex and is recruited early to the Z-ring. Probably stimulates Z-ring formation, perhaps through the cross-linking of FtsZ protofilaments. Its function overlaps with FtsA. The chain is Cell division protein SepF from Brevibacillus brevis (strain 47 / JCM 6285 / NBRC 100599).